The primary structure comprises 220 residues: Protein-L-isoaspartate O-methyltransferase (220 aa).

S70 is a catalytic residue.

Belongs to the methyltransferase superfamily. L-isoaspartyl/D-aspartyl protein methyltransferase family.

It localises to the cytoplasm. It catalyses the reaction [protein]-L-isoaspartate + S-adenosyl-L-methionine = [protein]-L-isoaspartate alpha-methyl ester + S-adenosyl-L-homocysteine. Functionally, catalyzes the methyl esterification of L-isoaspartyl residues in peptides and proteins that result from spontaneous decomposition of normal L-aspartyl and L-asparaginyl residues. It plays a role in the repair and/or degradation of damaged proteins. The protein is Protein-L-isoaspartate O-methyltransferase of Halorhodospira halophila (strain DSM 244 / SL1) (Ectothiorhodospira halophila (strain DSM 244 / SL1)).